A 297-amino-acid chain; its full sequence is uncharacterized protein (297 aa).

The region spanning 187-285 (EKLIATLHAS…GYAPSAVLKN (99 aa)) is the HTH araC/xylS-type domain. 2 DNA-binding regions (H-T-H motif) span residues 204 to 225 (ADMA…LRYT) and 252 to 275 (VGEV…KHKF).

This is an uncharacterized protein from Escherichia coli (strain K12).